The primary structure comprises 142 residues: MGRFIFVSFSLLVVFLSLSGTGAHCPSGWYTYEGHCYRVFQQNMTWEDAEKFCTQQYEKSHLVSFRSSEEVDFLVSLLKVDLFWMGRRDIWNERRLQWSDGTKVDYKDWRAKPECIVCRATDNHWLSTSCSETHNVICKFET.

An N-terminal signal peptide occupies residues 1 to 23; it reads MGRFIFVSFSLLVVFLSLSGTGA. Residues Cys25 and Cys36 are joined by a disulfide bond. The C-type lectin domain occupies 32–139; sequence YEGHCYRVFQ…CSETHNVICK (108 aa). N-linked (GlcNAc...) asparagine glycosylation is present at Asn43. Intrachain disulfides connect Cys53-Cys138 and Cys115-Cys130.

This sequence belongs to the snaclec family. As to quaternary structure, heterodimer; disulfide-linked. As to expression, expressed by the venom gland.

Its subcellular location is the secreted. In terms of biological role, interferes with one step of hemostasis (modulation of platelet aggregation, or coagulation cascade, for example). This is Snaclec 2 from Sistrurus catenatus edwardsii (Desert massasauga).